Reading from the N-terminus, the 263-residue chain is Leukocyte-associated immunoglobulin-like receptor 1 (263 aa).

An N-terminal signal peptide occupies residues 1 to 21 (MSLHPVILLVLVLCLGWKINT). Residues 22–144 (QEGSLPDITI…TSWLKTYSIY (123 aa)) lie on the Extracellular side of the membrane. Residues 27–115 (PDITIFPNSS…TWSERSKTLE (89 aa)) form the Ig-like C2-type domain. Residues asparagine 34 and asparagine 90 are each glycosylated (N-linked (GlcNAc...) asparagine). A disulfide bridge links cysteine 49 with cysteine 99. Residues 145-165 (IFTVVSVIFLLCLSALLFCFL) traverse the membrane as a helical segment. The Cytoplasmic portion of the chain corresponds to 166–263 (RHRQKKQGLP…SSTYAAIIRH (98 aa)). 2 consecutive short sequence motifs (ITIM motif) follow at residues 226-231 (VTYIQL) and 255-260 (STYAAI). Residues tyrosine 228 and tyrosine 257 each carry the phosphotyrosine modification.

In terms of assembly, interacts with SH2 domains of tyrosine-protein phosphatases PTPN6 and PTPN11. The interaction with PTPN6 is constitutive. Interacts with the SH2 domain of CSK. Binds with high affinity to extracellular matrix collagens, the interaction is functionally important. Post-translationally, phosphorylation at Tyr-228 and Tyr-257 activates it. May be phosphorylated by LCK. N-glycosylated. Expressed in lymphoid organs and in cell lines of hemopoietic origin.

It is found in the cell membrane. Functionally, functions as an inhibitory receptor that plays a constitutive negative regulatory role on cytolytic function of natural killer (NK) cells, B-cells and T-cells. Activation by Tyr phosphorylation results in recruitment and activation of the phosphatases PTPN6 and PTPN11. It also reduces the increase of intracellular calcium evoked by B-cell receptor ligation. May also play its inhibitory role independently of SH2-containing phosphatases. Modulates cytokine production in CD4+ T-cells, down-regulating IL2 and IFNG production while inducing secretion of transforming growth factor beta. Also down-regulates IgG and IgE production in B-cells as well as IL8, IL10 and TNF secretion. Inhibits proliferation and induces apoptosis in myeloid leukemia cell lines as well as prevents nuclear translocation of NF-kappa-B p65 subunit/RELA and phosphorylation of I-kappa-B alpha/CHUK in these cells. Inhibits the differentiation of peripheral blood precursors towards dendritic cells. The sequence is that of Leukocyte-associated immunoglobulin-like receptor 1 (Lair1) from Mus musculus (Mouse).